A 96-amino-acid polypeptide reads, in one-letter code: MEIKQHALAGTLESSDVQIMIAPANNGISIDLISDVKKQFGKQIEATVRQVLAAYAIENADVQVIDKGALDLVIKARAIAVVERAIEAKDLNWEVL.

Residue Ser14 is modified to O-(phosphoribosyl dephospho-coenzyme A)serine.

This sequence belongs to the CitD family. In terms of assembly, oligomer with a subunit composition of (alpha,beta,gamma)6.

Its subcellular location is the cytoplasm. Its function is as follows. Covalent carrier of the coenzyme of citrate lyase. This Lactococcus lactis subsp. lactis (strain IL1403) (Streptococcus lactis) protein is Citrate lyase acyl carrier protein.